A 448-amino-acid chain; its full sequence is UDP-glycosyltransferase 79B5 (448 aa).

UDP-alpha-D-glucose-binding positions include Thr261, Leu320–Gln322, His337–Glu345, and Leu359–Gln362.

The protein belongs to the UDP-glycosyltransferase family.

This is UDP-glycosyltransferase 79B5 (UGT79B5) from Arabidopsis thaliana (Mouse-ear cress).